Reading from the N-terminus, the 50-residue chain is Large ribosomal subunit protein bL33A (50 aa).

The protein belongs to the bacterial ribosomal protein bL33 family.

In Mycoplasmopsis pulmonis (strain UAB CTIP) (Mycoplasma pulmonis), this protein is Large ribosomal subunit protein bL33A (rpmG1).